Reading from the N-terminus, the 401-residue chain is Argininosuccinate synthase (401 aa).

8–16 (AYSGGLDTS) serves as a coordination point for ATP. Position 85 (Tyr-85) interacts with L-citrulline. ATP is bound at residue Gly-115. L-aspartate is bound by residues Thr-117, Asn-121, and Asp-122. Residue Asn-121 coordinates L-citrulline. Residues Arg-125, Ser-173, Glu-258, and Tyr-270 each contribute to the L-citrulline site.

It belongs to the argininosuccinate synthase family. Type 1 subfamily. Homotetramer.

Its subcellular location is the cytoplasm. It catalyses the reaction L-citrulline + L-aspartate + ATP = 2-(N(omega)-L-arginino)succinate + AMP + diphosphate + H(+). Its pathway is amino-acid biosynthesis; L-arginine biosynthesis; L-arginine from L-ornithine and carbamoyl phosphate: step 2/3. In Staphylococcus carnosus (strain TM300), this protein is Argininosuccinate synthase.